Here is a 57-residue protein sequence, read N- to C-terminus: COP9 signalosome complex subunit 9 (57 aa).

A Phosphothreonine modification is found at threonine 26.

Belongs to the CSN9 family. As to quaternary structure, component of the CSN complex, composed of COPS1/GPS1, COPS2, COPS3, COPS4, COPS5, COPS6, COPS7 (COPS7A or COPS7B), COPS8 and COPS9. In the complex, it interacts directly with COPS3, COPS5 and COPS6.

It is found in the nucleus. Its subcellular location is the cytoplasm. It localises to the nucleoplasm. Component of the COP9 signalosome complex (CSN), a complex involved in various cellular and developmental processes. The CSN complex is an essential regulator of the ubiquitin (Ubl) conjugation pathway by mediating the deneddylation of the cullin subunits of SCF-type E3 ligase complexes, leading to decrease the Ubl ligase activity of SCF-type complexes such as SCF, CSA or DDB2. The complex is also involved in phosphorylation of p53/TP53, c-jun/JUN, IkappaBalpha/NFKBIA, ITPK1 and IRF8/ICSBP, possibly via its association with CK2 and PKD kinases. CSN-dependent phosphorylation of TP53 and JUN promotes and protects degradation by the Ubl system, respectively. Plays a role in cell proliferation. In Bos taurus (Bovine), this protein is COP9 signalosome complex subunit 9.